Here is a 675-residue protein sequence, read N- to C-terminus: Pesticidal crystal protein Cry25Aa (675 aa).

Belongs to the delta endotoxin family.

Functionally, promotes colloidosmotic lysis by binding to the midgut epithelial cells of insects. The sequence is that of Pesticidal crystal protein Cry25Aa (cry25Aa) from Bacillus thuringiensis subsp. jegathesan.